We begin with the raw amino-acid sequence, 336 residues long: Aspartate--ammonia ligase (336 aa).

It belongs to the class-II aminoacyl-tRNA synthetase family. AsnA subfamily.

The protein resides in the cytoplasm. The enzyme catalyses L-aspartate + NH4(+) + ATP = L-asparagine + AMP + diphosphate + H(+). It participates in amino-acid biosynthesis; L-asparagine biosynthesis; L-asparagine from L-aspartate (ammonia route): step 1/1. The chain is Aspartate--ammonia ligase from Clostridium perfringens (strain 13 / Type A).